A 54-amino-acid chain; its full sequence is Large ribosomal subunit protein bL33 (54 aa).

Belongs to the bacterial ribosomal protein bL33 family.

The protein is Large ribosomal subunit protein bL33 of Thermobifida fusca (strain YX).